Consider the following 79-residue polypeptide: uncharacterized protein (79 aa).

The 51-residue stretch at 10–60 folds into the SpoVT-AbrB domain; sequence EAVLTMDSKGQILLPKELRERAGLKAGDRLVAIAGCDENEEVCCLILVKAE.

This is an uncharacterized protein from Archaeoglobus fulgidus (strain ATCC 49558 / DSM 4304 / JCM 9628 / NBRC 100126 / VC-16).